Here is a 350-residue protein sequence, read N- to C-terminus: Nicotinate-nucleotide--dimethylbenzimidazole phosphoribosyltransferase (350 aa).

Glu317 functions as the Proton acceptor in the catalytic mechanism.

Belongs to the CobT family.

It catalyses the reaction 5,6-dimethylbenzimidazole + nicotinate beta-D-ribonucleotide = alpha-ribazole 5'-phosphate + nicotinate + H(+). Its pathway is nucleoside biosynthesis; alpha-ribazole biosynthesis; alpha-ribazole from 5,6-dimethylbenzimidazole: step 1/2. In terms of biological role, catalyzes the synthesis of alpha-ribazole-5'-phosphate from nicotinate mononucleotide (NAMN) and 5,6-dimethylbenzimidazole (DMB). The protein is Nicotinate-nucleotide--dimethylbenzimidazole phosphoribosyltransferase of Shewanella sp. (strain MR-4).